A 212-amino-acid chain; its full sequence is Large ribosomal subunit protein uL3 (212 aa).

The interval 119–146 (YQGNIKRWGQSRGPETHGSRYHRIPGSM) is disordered.

It belongs to the universal ribosomal protein uL3 family. As to quaternary structure, part of the 50S ribosomal subunit. Forms a cluster with proteins L14 and L19.

In terms of biological role, one of the primary rRNA binding proteins, it binds directly near the 3'-end of the 23S rRNA, where it nucleates assembly of the 50S subunit. The sequence is that of Large ribosomal subunit protein uL3 from Lactobacillus helveticus (strain DPC 4571).